The primary structure comprises 199 residues: Probable septum site-determining protein MinC (199 aa).

Belongs to the MinC family. Interacts with MinD and FtsZ.

In terms of biological role, cell division inhibitor that blocks the formation of polar Z ring septums. Rapidly oscillates between the poles of the cell to destabilize FtsZ filaments that have formed before they mature into polar Z rings. Prevents FtsZ polymerization. This Persephonella marina (strain DSM 14350 / EX-H1) protein is Probable septum site-determining protein MinC.